The sequence spans 205 residues: Holliday junction branch migration complex subunit RuvA (205 aa).

The segment at 1–64 (MIGRLRGIIL…EDAQLLFGFI (64 aa)) is domain I. The segment at 65-143 (HKQERVLFRE…GLSGDLFVPQ (79 aa)) is domain II. The tract at residues 144–156 (GAGEIPAAIDAPA) is flexible linker. A domain III region spans residues 157–205 (MPADPEGEAVAALVALGYKPQEASRMVSKVASAGSDCEMLIRDALRAAL).

It belongs to the RuvA family. Homotetramer. Forms an RuvA(8)-RuvB(12)-Holliday junction (HJ) complex. HJ DNA is sandwiched between 2 RuvA tetramers; dsDNA enters through RuvA and exits via RuvB. An RuvB hexamer assembles on each DNA strand where it exits the tetramer. Each RuvB hexamer is contacted by two RuvA subunits (via domain III) on 2 adjacent RuvB subunits; this complex drives branch migration. In the full resolvosome a probable DNA-RuvA(4)-RuvB(12)-RuvC(2) complex forms which resolves the HJ.

It localises to the cytoplasm. Functionally, the RuvA-RuvB-RuvC complex processes Holliday junction (HJ) DNA during genetic recombination and DNA repair, while the RuvA-RuvB complex plays an important role in the rescue of blocked DNA replication forks via replication fork reversal (RFR). RuvA specifically binds to HJ cruciform DNA, conferring on it an open structure. The RuvB hexamer acts as an ATP-dependent pump, pulling dsDNA into and through the RuvAB complex. HJ branch migration allows RuvC to scan DNA until it finds its consensus sequence, where it cleaves and resolves the cruciform DNA. This chain is Holliday junction branch migration complex subunit RuvA, found in Sodalis glossinidius (strain morsitans).